The sequence spans 128 residues: 2-iminobutanoate/2-iminopropanoate deaminase (128 aa).

Position 105 (Arg105) interacts with substrate.

The protein belongs to the RutC family. As to quaternary structure, homotrimer.

It is found in the cytoplasm. The enzyme catalyses 2-iminobutanoate + H2O = 2-oxobutanoate + NH4(+). It carries out the reaction 2-iminopropanoate + H2O = pyruvate + NH4(+). It participates in amino-acid biosynthesis; L-isoleucine biosynthesis; 2-oxobutanoate from L-threonine. Accelerates the release of ammonia from reactive enamine/imine intermediates of the PLP-dependent threonine dehydratase (IlvA) in the low water environment of the cell. It catalyzes the deamination of enamine/imine intermediates to yield 2-ketobutyrate and ammonia. It is required for the detoxification of reactive intermediates of IlvA due to their highly nucleophilic abilities and to avoid they are captured by anthranilate phosphoribosyltransferase (TrpD) to generate PRA, an intermediate in the alternative pyrimidine biosynthetic (APB) pathway. Also required for full activity of IlvE which is involved in the isoleucine biosynthesis. RidA also accelerates the release of pyruvate produced by IlvA from L-serine. In Salmonella typhimurium (strain LT2 / SGSC1412 / ATCC 700720), this protein is 2-iminobutanoate/2-iminopropanoate deaminase.